Reading from the N-terminus, the 693-residue chain is UvrABC system protein B (693 aa).

The Helicase ATP-binding domain maps to Glu-35–Met-188. Residue Gly-48–Ser-55 participates in ATP binding. The Beta-hairpin signature appears at Tyr-101–Val-124. A Helicase C-terminal domain is found at Gln-438–Thr-604. Residues Val-648–Glu-683 form the UVR domain.

This sequence belongs to the UvrB family. In terms of assembly, forms a heterotetramer with UvrA during the search for lesions. Interacts with UvrC in an incision complex.

The protein resides in the cytoplasm. Functionally, the UvrABC repair system catalyzes the recognition and processing of DNA lesions. A damage recognition complex composed of 2 UvrA and 2 UvrB subunits scans DNA for abnormalities. Upon binding of the UvrA(2)B(2) complex to a putative damaged site, the DNA wraps around one UvrB monomer. DNA wrap is dependent on ATP binding by UvrB and probably causes local melting of the DNA helix, facilitating insertion of UvrB beta-hairpin between the DNA strands. Then UvrB probes one DNA strand for the presence of a lesion. If a lesion is found the UvrA subunits dissociate and the UvrB-DNA preincision complex is formed. This complex is subsequently bound by UvrC and the second UvrB is released. If no lesion is found, the DNA wraps around the other UvrB subunit that will check the other stand for damage. In Arthrobacter sp. (strain FB24), this protein is UvrABC system protein B.